The primary structure comprises 160 residues: 2-C-methyl-D-erythritol 2,4-cyclodiphosphate synthase (160 aa).

D9 and H11 together coordinate a divalent metal cation. Residues 9–11 and 35–36 each bind 4-CDP-2-C-methyl-D-erythritol 2-phosphate; these read DVH and HS. H43 contributes to the a divalent metal cation binding site. 4-CDP-2-C-methyl-D-erythritol 2-phosphate contacts are provided by residues 57-59, 62-66, 133-136, F140, and R143; these read DIG, FPDTD, and TTTE.

Belongs to the IspF family. In terms of assembly, homotrimer. The cofactor is a divalent metal cation.

The catalysed reaction is 4-CDP-2-C-methyl-D-erythritol 2-phosphate = 2-C-methyl-D-erythritol 2,4-cyclic diphosphate + CMP. The protein operates within isoprenoid biosynthesis; isopentenyl diphosphate biosynthesis via DXP pathway; isopentenyl diphosphate from 1-deoxy-D-xylulose 5-phosphate: step 4/6. In terms of biological role, involved in the biosynthesis of isopentenyl diphosphate (IPP) and dimethylallyl diphosphate (DMAPP), two major building blocks of isoprenoid compounds. Catalyzes the conversion of 4-diphosphocytidyl-2-C-methyl-D-erythritol 2-phosphate (CDP-ME2P) to 2-C-methyl-D-erythritol 2,4-cyclodiphosphate (ME-CPP) with a corresponding release of cytidine 5-monophosphate (CMP). The chain is 2-C-methyl-D-erythritol 2,4-cyclodiphosphate synthase from Haemophilus ducreyi (strain 35000HP / ATCC 700724).